The chain runs to 515 residues: Maturase K (515 aa).

It belongs to the intron maturase 2 family. MatK subfamily.

The protein localises to the plastid. Its subcellular location is the chloroplast. Usually encoded in the trnK tRNA gene intron. Probably assists in splicing its own and other chloroplast group II introns. The chain is Maturase K from Pinus clausa (Sand pine).